We begin with the raw amino-acid sequence, 370 residues long: tRNA-specific 2-thiouridylase MnmA (370 aa).

ATP contacts are provided by residues 24–31 and leucine 50; that span reads AMSGGVDS. Catalysis depends on cysteine 118, which acts as the Nucleophile. The cysteines at positions 118 and 214 are disulfide-linked. Glycine 142 lines the ATP pocket. The interval 164–166 is interaction with tRNA; it reads KDQ. The active-site Cysteine persulfide intermediate is the cysteine 214.

It belongs to the MnmA/TRMU family.

It localises to the cytoplasm. The catalysed reaction is S-sulfanyl-L-cysteinyl-[protein] + uridine(34) in tRNA + AH2 + ATP = 2-thiouridine(34) in tRNA + L-cysteinyl-[protein] + A + AMP + diphosphate + H(+). Functionally, catalyzes the 2-thiolation of uridine at the wobble position (U34) of tRNA, leading to the formation of s(2)U34. In Ehrlichia ruminantium (strain Gardel), this protein is tRNA-specific 2-thiouridylase MnmA.